The following is a 122-amino-acid chain: Large ribosomal subunit protein uL14c (122 aa).

It belongs to the universal ribosomal protein uL14 family. As to quaternary structure, part of the 50S ribosomal subunit.

It localises to the plastid. It is found in the chloroplast. Functionally, binds to 23S rRNA. This is Large ribosomal subunit protein uL14c from Porphyra purpurea (Red seaweed).